We begin with the raw amino-acid sequence, 248 residues long: MDIEQPSINVINSLYQISGVEVGQHFYLQIGNFQVHAQVLITSWVVIAILLGLSIVATRDLQTIPTGSQNFIEYVLEFIRDLTRTQIGEEEYRPWVPFIGTMFLFIFVSNWSGALFPWRIIQLPHGELAAPTNDINTTVALALLTSVAYFYAGLHKRGLSYFGKYIQPTPVLLPINILEDFTKPLSLSFRLFGNILADELVVAVLISLVPLVVPIPMMFLGLFTSAIQALIFATLAAAYIGESMEGHH.

5 helical membrane-spanning segments follow: residues 37 to 57 (AQVLITSWVVIAILLGLSIVA), 96 to 116 (VPFIGTMFLFIFVSNWSGALF), 135 to 155 (INTTVALALLTSVAYFYAGLH), 200 to 220 (LVVAVLISLVPLVVPIPMMFL), and 221 to 241 (GLFTSAIQALIFATLAAAYIG).

The protein belongs to the ATPase A chain family. F-type ATPases have 2 components, CF(1) - the catalytic core - and CF(0) - the membrane proton channel. CF(1) has five subunits: alpha(3), beta(3), gamma(1), delta(1), epsilon(1). CF(0) has four main subunits: a, b, b' and c.

It localises to the plastid. Its subcellular location is the chloroplast thylakoid membrane. Functionally, key component of the proton channel; it plays a direct role in the translocation of protons across the membrane. This Angiopteris evecta (Mule's foot fern) protein is ATP synthase subunit a, chloroplastic.